The sequence spans 240 residues: Cysteine-rich venom protein (240 aa).

An N-terminal signal peptide occupies residues 1-19 (MIAFIVLPILAAVLQQSSG). The SCP domain occupies 39–166 (DLHNSLRRSV…EYSYFYVCQY (128 aa)). 8 disulfide bridges follow: cysteine 75–cysteine 153, cysteine 92–cysteine 167, cysteine 148–cysteine 164, cysteine 186–cysteine 193, cysteine 189–cysteine 198, cysteine 202–cysteine 235, cysteine 211–cysteine 229, and cysteine 220–cysteine 233. The ShKT domain maps to 202 to 235 (CRQENKFTNCDSLVRQSSCQDNYMKTNCPASCFC).

This sequence belongs to the CRISP family. Expressed by the venom gland.

The protein localises to the secreted. Blocks contraction of smooth muscle elicited by high potassium-induced depolarization, but does not block caffeine-stimulated contraction. May target voltage-gated calcium channels on smooth muscle. The chain is Cysteine-rich venom protein from Protobothrops jerdonii (Jerdon's pitviper).